The following is a 563-amino-acid chain: Group II intron-interrupted relaxase LtrB (563 aa).

The active site involves tyrosine 44. Histidine 159 and histidine 161 together coordinate Mg(2+).

It belongs to the mobilization (MOB) protein type 1 family. The cofactor is Mg(2+). Requires Mn(2+) as cofactor.

Mediates initiation of conjugal transfer possibly by introducing a single-stranded nick at the potential origin of transfer. This chain is Group II intron-interrupted relaxase LtrB (ltrBE1), found in Lactococcus lactis subsp. cremoris (strain MG1363).